The following is a 513-amino-acid chain: Coiled-coil domain-containing protein 102B (513 aa).

The interval 1–217 is required for centriolar localization and for interaction with CEP250, CROCC, LRRC45 and NEK2; sequence MNLDSIHRLI…IDSLKLSEEM (217 aa). 7 positions are modified to phosphoserine: Ser-21, Ser-22, Ser-34, Ser-135, Ser-142, Ser-194, and Ser-210. Positions 72-142 form a coiled coil; it reads ELRLRELEEV…ELSTLKKKQS (71 aa). Coiled-coil stretches lie at residues 268–337 and 363–513; these read QKIL…ESKS and WDKR…LQNW. Residues Ser-401, Ser-404, and Ser-406 each carry the phosphoserine modification. Residues 493-513 are disordered; it reads LDEEKERNENLETELRHLQNW.

As to quaternary structure, interacts (via N-terminus) with centriolar protein CEP250/CNAP1; the interaction results in recruitment of CCDC102B to the proximal ends of centrioles. Interacts (via N-terminus) with CROCC/rootletin and LRRC45. Interacts (via N-terminus) with serine/threonine-protein kinase NEK2; the interaction results in phosphorylation of CCDC102B. In terms of processing, phosphorylated directly or indirectly by NEK2 during mitosis which causes dissociation of CCDC102B from the centrosome and allows for centrosome separation.

The protein resides in the cytoplasm. It is found in the cytoskeleton. The protein localises to the microtubule organizing center. Its subcellular location is the centrosome. It localises to the centriole. In terms of biological role, during interphase, forms fibers at the proximal ends of centrioles to maintain centrosome cohesion. During mitosis, dissociates from the centrosome following phosphorylation to allow centrosome separation. Contributes to CROCC/rootletin filament formation. This is Coiled-coil domain-containing protein 102B (CCDC102B) from Homo sapiens (Human).